Here is a 63-residue protein sequence, read N- to C-terminus: Sperm protamine P1 (63 aa).

The disordered stretch occupies residues 1–63; that stretch reads MARYRRHSRS…RYSRRGRRRY (63 aa).

It belongs to the protamine P1 family. Testis.

The protein resides in the nucleus. It is found in the chromosome. In terms of biological role, protamines substitute for histones in the chromatin of sperm during the haploid phase of spermatogenesis. They compact sperm DNA into a highly condensed, stable and inactive complex. This is Sperm protamine P1 (PRM1) from Sminthopsis bindi (Kakadu dunnart).